A 404-amino-acid polypeptide reads, in one-letter code: Dual-specificity RNA methyltransferase RlmN (404 aa).

The active-site Proton acceptor is E118. One can recognise a Radical SAM core domain in the interval 125–357; that stretch reads VGRAGALCVS…NKAGYSSPIR (233 aa). A disulfide bridge links C132 with C368. Residues C139, C143, and C146 each contribute to the [4Fe-4S] cluster site. S-adenosyl-L-methionine contacts are provided by residues 194–195, S226, 248–250, and N325; these read GE and SLH. C368 acts as the S-methylcysteine intermediate in catalysis.

The protein belongs to the radical SAM superfamily. RlmN family. [4Fe-4S] cluster serves as cofactor.

The protein resides in the cytoplasm. The catalysed reaction is adenosine(2503) in 23S rRNA + 2 reduced [2Fe-2S]-[ferredoxin] + 2 S-adenosyl-L-methionine = 2-methyladenosine(2503) in 23S rRNA + 5'-deoxyadenosine + L-methionine + 2 oxidized [2Fe-2S]-[ferredoxin] + S-adenosyl-L-homocysteine. It catalyses the reaction adenosine(37) in tRNA + 2 reduced [2Fe-2S]-[ferredoxin] + 2 S-adenosyl-L-methionine = 2-methyladenosine(37) in tRNA + 5'-deoxyadenosine + L-methionine + 2 oxidized [2Fe-2S]-[ferredoxin] + S-adenosyl-L-homocysteine. Specifically methylates position 2 of adenine 2503 in 23S rRNA and position 2 of adenine 37 in tRNAs. m2A2503 modification seems to play a crucial role in the proofreading step occurring at the peptidyl transferase center and thus would serve to optimize ribosomal fidelity. The protein is Dual-specificity RNA methyltransferase RlmN of Caulobacter vibrioides (strain ATCC 19089 / CIP 103742 / CB 15) (Caulobacter crescentus).